The sequence spans 285 residues: Probable endonuclease 4 (285 aa).

His-69, His-109, Glu-145, Asp-179, His-182, His-216, Asp-229, His-231, and Glu-261 together coordinate Zn(2+).

This sequence belongs to the AP endonuclease 2 family. Requires Zn(2+) as cofactor.

It catalyses the reaction Endonucleolytic cleavage to 5'-phosphooligonucleotide end-products.. Functionally, endonuclease IV plays a role in DNA repair. It cleaves phosphodiester bonds at apurinic or apyrimidinic (AP) sites, generating a 3'-hydroxyl group and a 5'-terminal sugar phosphate. The polypeptide is Probable endonuclease 4 (Shigella sonnei (strain Ss046)).